The primary structure comprises 163 residues: Homoaconitase small subunit (163 aa).

Belongs to the LeuD family. As to quaternary structure, heterodimer of HacA and HacB.

The enzyme catalyses (2R,3S)-homoisocitrate = cis-homoaconitate + H2O. It participates in amino-acid biosynthesis; L-lysine biosynthesis via AAA pathway; L-alpha-aminoadipate from 2-oxoglutarate: step 3/5. Is not inhibited by lysine. Its function is as follows. Catalyzes the reversible hydration of cis-homoaconitate ((Z)-but-1-ene-1,2,4-tricarboxylate) to homoisocitrate ((1R,2S)-1-hydroxybutane-1,2,4-tricarboxylate). Can catalyze neither the dehydration of (R)-homocitrate ((2R)-2-hydroxybutane-1,2,4-tricarboxylate) into cis-homoaconitate in vitro, nor the reverse reaction. Is not active toward (S)-homocitrate, cis-aconitate or citrate as substrate. The protein is Homoaconitase small subunit (hacB) of Thermus thermophilus (strain ATCC BAA-163 / DSM 7039 / HB27).